A 187-amino-acid chain; its full sequence is Putative manganese efflux pump MntP (187 aa).

The next 6 membrane-spanning stretches (helical) occupy residues 3–23 (MSAT…ASIG), 41–61 (LIFG…GFFA), 62–82 (SQYI…ILGG), 107–129 (LLVC…LAFL), 143–163 (ATMI…PILG), and 166–186 (AEII…YEHL).

Belongs to the MntP (TC 9.B.29) family.

Its subcellular location is the cell inner membrane. Probably functions as a manganese efflux pump. The polypeptide is Putative manganese efflux pump MntP (Pectobacterium atrosepticum (strain SCRI 1043 / ATCC BAA-672) (Erwinia carotovora subsp. atroseptica)).